The primary structure comprises 378 residues: Transcription elongation factor TFIIS (378 aa).

M1 carries the N-acetylmethionine modification. The TFIIS N-terminal domain maps to 10-89 (EGAKKAADAA…EIWKKVVIEE (80 aa)). The TFIIS central domain maps to 210 to 333 (VRDKIRELLV…DCERGLAAKA (124 aa)). Residues 336-376 (DQFKCGRCGQRKCTYYQMQTRSADEPMTTYVTCVNCDNHWK) form a TFIIS-type zinc finger. Zn(2+) contacts are provided by C340, C343, C368, and C371.

In terms of tissue distribution, expressed in roots, leaves and flowers.

The protein resides in the nucleus. Necessary for efficient RNA polymerase II transcription elongation past template-encoded arresting sites. Involved in the control of seed dormancy and germination. In Arabidopsis thaliana (Mouse-ear cress), this protein is Transcription elongation factor TFIIS.